The chain runs to 80 residues: Small ribosomal subunit protein bS16 (80 aa).

It belongs to the bacterial ribosomal protein bS16 family.

In Nitrosococcus oceani (strain ATCC 19707 / BCRC 17464 / JCM 30415 / NCIMB 11848 / C-107), this protein is Small ribosomal subunit protein bS16.